Reading from the N-terminus, the 1494-residue chain is DNA-directed RNA polymerase subunit beta' (1494 aa).

Residues C67, C69, C82, and C85 each coordinate Zn(2+). Residues D499, D501, and D503 each coordinate Mg(2+). Zn(2+) is bound by residues C868, C944, C951, and C954.

It belongs to the RNA polymerase beta' chain family. As to quaternary structure, the RNAP catalytic core consists of 2 alpha, 1 beta, 1 beta' and 1 omega subunit. When a sigma factor is associated with the core the holoenzyme is formed, which can initiate transcription. Requires Mg(2+) as cofactor. It depends on Zn(2+) as a cofactor.

The catalysed reaction is RNA(n) + a ribonucleoside 5'-triphosphate = RNA(n+1) + diphosphate. In terms of biological role, DNA-dependent RNA polymerase catalyzes the transcription of DNA into RNA using the four ribonucleoside triphosphates as substrates. This chain is DNA-directed RNA polymerase subunit beta', found in Chlorobaculum parvum (strain DSM 263 / NCIMB 8327) (Chlorobium vibrioforme subsp. thiosulfatophilum).